We begin with the raw amino-acid sequence, 330 residues long: Aspartate--ammonia ligase (330 aa).

It belongs to the class-II aminoacyl-tRNA synthetase family. AsnA subfamily.

Its subcellular location is the cytoplasm. The catalysed reaction is L-aspartate + NH4(+) + ATP = L-asparagine + AMP + diphosphate + H(+). It participates in amino-acid biosynthesis; L-asparagine biosynthesis; L-asparagine from L-aspartate (ammonia route): step 1/1. The sequence is that of Aspartate--ammonia ligase from Streptococcus uberis (strain ATCC BAA-854 / 0140J).